We begin with the raw amino-acid sequence, 134 residues long: Putative nickel-responsive regulator (134 aa).

Residues His-78, His-89, His-91, and Cys-97 each contribute to the Ni(2+) site.

Belongs to the transcriptional regulatory CopG/NikR family. Ni(2+) serves as cofactor.

In terms of biological role, transcriptional regulator. The sequence is that of Putative nickel-responsive regulator from Chlorobaculum parvum (strain DSM 263 / NCIMB 8327) (Chlorobium vibrioforme subsp. thiosulfatophilum).